The sequence spans 310 residues: Putative sugar kinase PH1459 (310 aa).

Positions 194, 219, and 224 each coordinate ATP.

Belongs to the carbohydrate kinase PfkB family.

The polypeptide is Putative sugar kinase PH1459 (Pyrococcus horikoshii (strain ATCC 700860 / DSM 12428 / JCM 9974 / NBRC 100139 / OT-3)).